A 232-amino-acid polypeptide reads, in one-letter code: tRNA (guanine-N(1)-)-methyltransferase (232 aa).

S-adenosyl-L-methionine is bound by residues Gly111 and 131-136; that span reads IGDYIL.

This sequence belongs to the RNA methyltransferase TrmD family. Homodimer.

Its subcellular location is the cytoplasm. The catalysed reaction is guanosine(37) in tRNA + S-adenosyl-L-methionine = N(1)-methylguanosine(37) in tRNA + S-adenosyl-L-homocysteine + H(+). In terms of biological role, specifically methylates guanosine-37 in various tRNAs. The protein is tRNA (guanine-N(1)-)-methyltransferase of Bartonella quintana (strain Toulouse) (Rochalimaea quintana).